Consider the following 274-residue polypeptide: Caldesmon, smooth muscle (274 aa).

Disordered regions lie at residues 1-102 (SNLK…FSPK) and 179-274 (KGNV…EKEP). 2 stretches are compositionally biased toward basic and acidic residues: residues 12–21 (GSEKLKEKQQ) and 28–95 (DELK…EKKP). Over residues 182–194 (VFSSPGGTGTPNK) the composition is skewed to polar residues. Basic and acidic residues-rich tracts occupy residues 226 to 245 (SDLRPGDVSGKRNLWEKQSV) and 260 to 274 (KKSETDGLRQFEKEP).

It is found in the cytoplasm. The protein localises to the cytoskeleton. It localises to the myofibril. Its subcellular location is the stress fiber. Control of actomyosin interactions in smooth muscle and nonmuscle cells (could act as a bridge between myosin and actin filaments). Inhibits the actin-activated ATPase of myosin this inhibition is attenuated by calcium-calmodulin and is potentiated by tropomyosin. Interacts with actin, myosin, 2 molecules of tropomyosin and with calmodulin. This chain is Caldesmon, smooth muscle (CALD1), found in Meleagris gallopavo (Wild turkey).